Consider the following 59-residue polypeptide: UPF0434 protein Sbal_1685 (59 aa).

The protein belongs to the UPF0434 family.

This Shewanella baltica (strain OS155 / ATCC BAA-1091) protein is UPF0434 protein Sbal_1685.